We begin with the raw amino-acid sequence, 97 residues long: Glutamyl-tRNA(Gln) amidotransferase subunit C (97 aa).

It belongs to the GatC family. Heterotrimer of A, B and C subunits.

The catalysed reaction is L-glutamyl-tRNA(Gln) + L-glutamine + ATP + H2O = L-glutaminyl-tRNA(Gln) + L-glutamate + ADP + phosphate + H(+). It catalyses the reaction L-aspartyl-tRNA(Asn) + L-glutamine + ATP + H2O = L-asparaginyl-tRNA(Asn) + L-glutamate + ADP + phosphate + 2 H(+). Its function is as follows. Allows the formation of correctly charged Asn-tRNA(Asn) or Gln-tRNA(Gln) through the transamidation of misacylated Asp-tRNA(Asn) or Glu-tRNA(Gln) in organisms which lack either or both of asparaginyl-tRNA or glutaminyl-tRNA synthetases. The reaction takes place in the presence of glutamine and ATP through an activated phospho-Asp-tRNA(Asn) or phospho-Glu-tRNA(Gln). This Saccharolobus solfataricus (strain ATCC 35092 / DSM 1617 / JCM 11322 / P2) (Sulfolobus solfataricus) protein is Glutamyl-tRNA(Gln) amidotransferase subunit C.